Consider the following 214-residue polypeptide: Small ribosomal subunit protein uS2 (214 aa).

The protein belongs to the universal ribosomal protein uS2 family.

The chain is Small ribosomal subunit protein uS2 from Thermofilum pendens (strain DSM 2475 / Hrk 5).